Reading from the N-terminus, the 344-residue chain is Dihydroorotate dehydrogenase (quinone) (344 aa).

Residues 61–65 (AGLDK) and threonine 85 contribute to the FMN site. Lysine 65 is a binding site for substrate. Substrate is bound at residue 110–114 (NRMGF). 2 residues coordinate FMN: asparagine 138 and asparagine 171. A substrate-binding site is contributed by asparagine 171. Serine 174 functions as the Nucleophile in the catalytic mechanism. Asparagine 176 contributes to the substrate binding site. Positions 216 and 244 each coordinate FMN. 245 to 246 (NT) contributes to the substrate binding site. Residues glycine 267, glycine 296, and 317 to 318 (YS) contribute to the FMN site.

This sequence belongs to the dihydroorotate dehydrogenase family. Type 2 subfamily. In terms of assembly, monomer. FMN is required as a cofactor.

The protein localises to the cell membrane. It carries out the reaction (S)-dihydroorotate + a quinone = orotate + a quinol. It functions in the pathway pyrimidine metabolism; UMP biosynthesis via de novo pathway; orotate from (S)-dihydroorotate (quinone route): step 1/1. In terms of biological role, catalyzes the conversion of dihydroorotate to orotate with quinone as electron acceptor. This is Dihydroorotate dehydrogenase (quinone) from Psychrobacter arcticus (strain DSM 17307 / VKM B-2377 / 273-4).